The sequence spans 647 residues: Leucine-rich repeat transmembrane protein FLRT3 (647 aa).

Positions 1–28 (MITVPWSVFLIWTKIGLLLDMAPYSVAA) are cleaved as a signal peptide. Residues 29 to 526 (KPCPSVCRCD…KEPYKNSSVP (498 aa)) are Extracellular-facing. The LRRNT domain occupies 30-62 (PCPSVCRCDVGFIYCNDRDLTSIPTGIPEDATN). 2 disulfide bridges follow: C31–C37 and C35–C44. 10 LRR repeats span residues 58 to 82 (EDATNLFLQNNQINNAGIPSELKNL), 83 to 105 (RRVERIFLYHNSLDEFPTNLPKY), 107 to 126 (KELHLQENNIRTITYDSLSQ), 127 to 152 (IPYLEELHLDDNSVSAVSIEDGAFRD), 154 to 179 (IYLRLLFLSRNHLSTIPWGLPKTIEE), 181 to 197 (RLDDNRISTISELSLQD), 198 to 223 (LTNLKRLVLDGNLLNNHGLGDKVFMN), 225 to 246 (VNLTELSLVRNSLTAAPVNLPG), 247 to 269 (TNLRKLYLQENHINHVPPNAFSY), and 270 to 293 (LRQLYRLDMSNNNLSNLPQGVFDD). N226 carries an N-linked (GlcNAc...) asparagine glycan. Positions 305 to 356 (NPWHCGCKMKWVRDWLQSLPLKVNVRGLMCQAPEKVRGMAIKDLNAELFDCK) constitute an LRRCT domain. An intrachain disulfide couples C309 to C334. The region spanning 404 to 502 (PVRKIITIFV…ECIETETAPL (99 aa)) is the Fibronectin type-III domain. The helical transmembrane segment at 527–547 (LAAIIGGAVALVALALLALVC) threads the bilayer. Topologically, residues 548-647 (WYVHRNGALF…GIPDSDHSHS (100 aa)) are cytoplasmic. Residues 620 to 647 (LYKNSHSESSSNRSYRDSGIPDSDHSHS) form a disordered region.

N-glycosylated. Post-translationally, proteolytic cleavage in the juxtamembrane region gives rise to a soluble ectodomain. Cleavage is probably effected by a metalloprotease.

Its subcellular location is the cell membrane. The protein resides in the endoplasmic reticulum membrane. It is found in the cell junction. The protein localises to the focal adhesion. It localises to the secreted. Its subcellular location is the cell projection. The protein resides in the axon. It is found in the growth cone membrane. Functionally, modulates the structure and function of the apical ectodermal ridge (AER) that controls embryonic limb development. Functions in cell-cell adhesion, cell migration and axon guidance, exerting an attractive or repulsive role depending on its interaction partners. Plays a role in the spatial organization of brain neurons. Plays a role in vascular development. Plays a role in cell-cell adhesion via its interaction with latrophilins that are expressed at the surface of adjacent cells. Mediates axon attraction towards cells expressing NTN1. Mediates axon growth cone collapse and plays a repulsive role in neuron guidance via its interaction with UNC-5 family members. Plays a role in the regulation of the density of glutamaergic synapses. Plays a role in fibroblast growth factor-mediated signaling cascades. Required for normal morphogenesis during embryonic development, but not for normal embryonic patterning. This chain is Leucine-rich repeat transmembrane protein FLRT3 (FLRT3), found in Gallus gallus (Chicken).